A 63-amino-acid chain; its full sequence is Large ribosomal subunit protein bL32 (63 aa).

The span at 1 to 18 (MPVPKRKTSPSRRGKRRS) shows a compositional bias: basic residues. The interval 1-26 (MPVPKRKTSPSRRGKRRSHDGLRPEN) is disordered.

This sequence belongs to the bacterial ribosomal protein bL32 family.

The polypeptide is Large ribosomal subunit protein bL32 (Neorickettsia sennetsu (strain ATCC VR-367 / Miyayama) (Ehrlichia sennetsu)).